Here is a 69-residue protein sequence, read N- to C-terminus: Alpha-conotoxin Mr1.7a (69 aa).

The signal sequence occupies residues Met1 to Ser21. The propeptide occupies Phe22–Ala49. A 4-hydroxyproline; in Mr1.7b mark is found at Pro52 and Pro58. 2 disulfides stabilise this stretch: Cys54-Cys60 and Cys55-Cys68. Residues Thr56 to Pro58 form a lacks the Ser-Xaa-Pro motif that is crucial for potent interaction with nAChR region. Cys68 is subject to Cysteine amide.

Belongs to the conotoxin A superfamily. Post-translationally, two 4-hydroxyprolines have been detected by MS but the assignment of which of the three prolines is modified is uncertain. In terms of tissue distribution, expressed by the venom duct.

The protein resides in the secreted. Acts as a co-agonist with PNU (an alpha-7 nAChR-selective allosteric modulator) at the endogenous alpha-7/CHRNA7 nicotinic acetylcholine receptors (nAChR) when tested in human SH-SY5Y neuroblastoma cells. Is the third alpha-conotoxin that acts as an agonist (after alpha-conotoxin SrIA/SrIB). Also acts as an antagonist at human alpha-7 nAChRs heterologously expressed in Xenopus oocytes. Has possibly a distinct nAChR binding mode from other alpha-conotoxins, due to a different three residue motif (lacks the Ser-Xaa-Pro motif). Its function is as follows. Acts as a weak partial agonist at alpha-7/CHRNA7 nicotinic acetylcholine receptors (nAChR) when tested in human SH-SY5Y neuroblastoma cells. Has possibly a distinct nAChR binding mode from other alpha-conotoxins, due to a different three residue motif (lacks the Ser-Xaa-Pro motif). This chain is Alpha-conotoxin Mr1.7a, found in Conus marmoreus (Marble cone).